A 689-amino-acid polypeptide reads, in one-letter code: Beta-adrenergic receptor kinase 1 (689 aa).

The tract at residues 1-190 is N-terminal; the sequence is MADLEAVLAD…ELNIHLTMND (190 aa). In terms of domain architecture, RGS spans 54 to 175; it reads TFEKIFSQKL…IESEKFTRFC (122 aa). Positions 191–453 constitute a Protein kinase domain; that stretch reads FSVHRIIGRG…AQEVKEDPFF (263 aa). ATP-binding positions include 197–205 and Lys-220; that span reads IGRGGFGEV. The active-site Proton acceptor is the Asp-317. The AGC-kinase C-terminal domain occupies 454-521; sequence KAVDWQMVLL…TISERWQQEV (68 aa). Positions 558–652 constitute a PH domain; the sequence is DCIMHGYMSK…WKKELRDVYR (95 aa). Residues 665 to 689 are disordered; that stretch reads KNKPRSPVVELSKMPLTQRGSANGL. Ser-670 is subject to Phosphoserine.

The protein belongs to the protein kinase superfamily. AGC Ser/Thr protein kinase family. GPRK subfamily. As to quaternary structure, interacts with the heterodimer formed by GNB1 and GNG2. Interacts with GIT1. Interacts with, and phosphorylates chemokine-stimulated CCR5. Interacts with ARRB1. Interacts with LPAR1 and LPAR2. Interacts with RALA in response to LPAR1 activation. ADRBK1 and RALA mutually inhibit each other's binding to LPAR1. Interacts with ADRB2.

It is found in the cytoplasm. It localises to the cell membrane. Its subcellular location is the postsynapse. The protein localises to the presynapse. It carries out the reaction [beta-adrenergic receptor] + ATP = [beta-adrenergic receptor]-phosphate + ADP + H(+). With respect to regulation, in contrast to other AGC family kinases, the catalytic activity is solely regulated by the binding of substrates and ligands, not by phosphorylation of the kinase domain. In terms of biological role, specifically phosphorylates the agonist-occupied form of the beta-adrenergic and closely related receptors, probably inducing a desensitization of them. Does not act on HTR1B/5-hydroxytryptamine 1B receptor. Key regulator of LPAR1 signaling. Competes with RALA for binding to LPAR1 thus affecting the signaling properties of the receptor. Desensitizes LPAR1 and LPAR2 in a phosphorylation-independent manner. Inhibits relaxation of airway smooth muscle in response to blue light. The chain is Beta-adrenergic receptor kinase 1 from Didelphis virginiana (North American opossum).